The primary structure comprises 262 residues: Aquaporin TIP3-1 (262 aa).

The next 2 helical transmembrane spans lie at 27–47 and 61–81; these read AAIS…GSVL and GLVA…AVAV. The short motif at 89-91 is the NPA 1 element; the sequence is NPA. 3 helical membrane-spanning segments follow: residues 104–124, 148–168, and 175–195; these read LVRA…ATLL, AVLL…ATVI, and VGTI…LAGG. The NPA 2 motif lies at 203-205; it reads NPA. A helical membrane pass occupies residues 223-243; it reads YWLGPFLGAGLAGLVYEYLVI.

The protein belongs to the MIP/aquaporin (TC 1.A.8) family. TIP (TC 1.A.8.10) subfamily.

It localises to the vacuole membrane. Functionally, aquaporins facilitate the transport of water and small neutral solutes across cell membranes. This is Aquaporin TIP3-1 (TIP3-1) from Zea mays (Maize).